The following is a 413-amino-acid chain: Serine hydroxymethyltransferase (413 aa).

(6S)-5,6,7,8-tetrahydrofolate-binding positions include leucine 117 and 121 to 123 (GHL). Lysine 226 carries the N6-(pyridoxal phosphate)lysine modification. 349 to 351 (SPF) is a binding site for (6S)-5,6,7,8-tetrahydrofolate.

The protein belongs to the SHMT family. Homodimer. It depends on pyridoxal 5'-phosphate as a cofactor.

It is found in the cytoplasm. It carries out the reaction (6R)-5,10-methylene-5,6,7,8-tetrahydrofolate + glycine + H2O = (6S)-5,6,7,8-tetrahydrofolate + L-serine. The protein operates within one-carbon metabolism; tetrahydrofolate interconversion. Its pathway is amino-acid biosynthesis; glycine biosynthesis; glycine from L-serine: step 1/1. Its function is as follows. Catalyzes the reversible interconversion of serine and glycine with tetrahydrofolate (THF) serving as the one-carbon carrier. This reaction serves as the major source of one-carbon groups required for the biosynthesis of purines, thymidylate, methionine, and other important biomolecules. Also exhibits THF-independent aldolase activity toward beta-hydroxyamino acids, producing glycine and aldehydes, via a retro-aldol mechanism. In Listeria monocytogenes serovar 1/2a (strain ATCC BAA-679 / EGD-e), this protein is Serine hydroxymethyltransferase.